A 455-amino-acid chain; its full sequence is Gamma-aminobutyric acid receptor subunit alpha-1 (455 aa).

A signal peptide spans 1-27 (MKRLLVLCDCLWAWSLLLNALTERSYG). At 28-253 (QTSSQDELKD…FHLKRKIGYF (226 aa)) the chain is on the extracellular side. A glycan (N-linked (GlcNAc...) asparagine) is linked at Asn38. A 4-aminobutanoate-binding site is contributed by Arg94. The N-linked (GlcNAc...) asparagine glycan is linked to Asn138. Thr157 lines the 4-aminobutanoate pocket. Residues Cys166 and Cys180 are joined by a disulfide bond. A helical membrane pass occupies residues 254-274 (VIQTYLPCIMTVILSQVSFWL). Residues 275–279 (NRESV) are Cytoplasmic-facing. A helical membrane pass occupies residues 280–301 (PARTVFGVTTVLTMTTLSISAR). At 302–311 (NSLPKVAYAT) the chain is on the extracellular side. Residues 312–333 (AMDWFIAVCYAFVFSALIEFAT) form a helical membrane-spanning segment. Residues 334–420 (VNYFTKRGYA…TFNSVSKIDR (87 aa)) lie on the Cytoplasmic side of the membrane. The chain crosses the membrane as a helical span at residues 421-440 (LSRIAFPLLFGIFNLVYWAT). At 441–455 (YLNREPQLKAPTPHQ) the chain is on the extracellular side.

Belongs to the ligand-gated ion channel (TC 1.A.9) family. Gamma-aminobutyric acid receptor (TC 1.A.9.5) subfamily. GABRA1 sub-subfamily. As to quaternary structure, heteropentamer, formed by a combination of alpha (GABRA1-6), beta (GABRB1-3), gamma (GABRG1-3), delta (GABRD), epsilon (GABRE), rho (GABRR1-3), pi (GABRP) and theta (GABRQ) subunits, each subunit exhibiting distinct physiological and pharmacological properties. Brain.

It is found in the postsynaptic cell membrane. It localises to the cell membrane. It carries out the reaction chloride(in) = chloride(out). Its activity is regulated as follows. Allosterically activated by benzodiazepines, the neuroanesthetic alphaxalone and pentobarbital. Inhibited by the antagonist bicuculline. Potentiated by histamine. In terms of biological role, alpha subunit of the heteropentameric ligand-gated chloride channel gated by gamma-aminobutyric acid (GABA), a major inhibitory neurotransmitter in the brain. GABA-gated chloride channels, also named GABA(A) receptors (GABAAR), consist of five subunits arranged around a central pore and contain GABA active binding site(s) located at the alpha and beta subunit interface(s). When activated by GABA, GABAARs selectively allow the flow of chloride anions across the cell membrane down their electrochemical gradient. Chloride influx into the postsynaptic neuron following GABAAR opening decreases the neuron ability to generate a new action potential, thereby reducing nerve transmission. The GABAARs can also initiate the formation of functional inhibitory GABAergic synapses. GABAARs function also as histamine receptor where histamine binds at the interface of two neighboring beta subunits and potentiates GABA response. This is Gamma-aminobutyric acid receptor subunit alpha-1 (GABRA1) from Gallus gallus (Chicken).